Consider the following 158-residue polypeptide: Large ribosomal subunit protein uL15 (158 aa).

2 disordered regions span residues 1-53 (MRIH…FEGG) and 138-158 (ESAG…SNNE). The segment covering 23–35 (ISAGQGASGGFGM) has biased composition (gly residues). Residues 145–158 (QDLSDTSNAPSNNE) show a composition bias toward polar residues.

It belongs to the universal ribosomal protein uL15 family. In terms of assembly, part of the 50S ribosomal subunit.

Its function is as follows. Binds to the 23S rRNA. This chain is Large ribosomal subunit protein uL15, found in Crocosphaera subtropica (strain ATCC 51142 / BH68) (Cyanothece sp. (strain ATCC 51142)).